We begin with the raw amino-acid sequence, 427 residues long: Light-independent protochlorophyllide reductase subunit N (427 aa).

[4Fe-4S] cluster-binding residues include Cys-28, Cys-53, and Cys-114.

Belongs to the BchN/ChlN family. As to quaternary structure, protochlorophyllide reductase is composed of three subunits; BchL, BchN and BchB. Forms a heterotetramer of two BchB and two BchN subunits. It depends on [4Fe-4S] cluster as a cofactor.

The enzyme catalyses chlorophyllide a + oxidized 2[4Fe-4S]-[ferredoxin] + 2 ADP + 2 phosphate = protochlorophyllide a + reduced 2[4Fe-4S]-[ferredoxin] + 2 ATP + 2 H2O. Its pathway is porphyrin-containing compound metabolism; bacteriochlorophyll biosynthesis (light-independent). Functionally, component of the dark-operative protochlorophyllide reductase (DPOR) that uses Mg-ATP and reduced ferredoxin to reduce ring D of protochlorophyllide (Pchlide) to form chlorophyllide a (Chlide). This reaction is light-independent. The NB-protein (BchN-BchB) is the catalytic component of the complex. This Jannaschia sp. (strain CCS1) protein is Light-independent protochlorophyllide reductase subunit N.